A 375-amino-acid polypeptide reads, in one-letter code: Flagellin (375 aa).

Belongs to the bacterial flagellin family.

The protein resides in the secreted. Its subcellular location is the bacterial flagellum. Flagellin is the subunit protein which polymerizes to form the filaments of bacterial flagella. Flagella are an important component in the invasiveness of B.bacilliformis. The polypeptide is Flagellin (Bartonella bacilliformis).